The primary structure comprises 57 residues: Myrmicitoxin(1)-Pm7a (57 aa).

An N-terminal signal peptide occupies residues 1–23 (MMKIIYAFLLIAVVAFMGSGIMA). The propeptide occupies 24–31 (EPLAEAIA).

The protein belongs to the formicidae venom clade 4 family. In terms of tissue distribution, expressed by the venom gland.

It localises to the secreted. Functionally, probable neurotoxin. This chain is Myrmicitoxin(1)-Pm7a, found in Pogonomyrmex maricopa (Maricopa harvester ant).